Here is a 499-residue protein sequence, read N- to C-terminus: Laccase (499 aa).

Plastocyanin-like domains are found at residues 2–127 and 139–281; these read VGPV…FVVY and VDND…ILRY. Asparagine 51 and asparagine 54 each carry an N-linked (GlcNAc...) asparagine glycan. Positions 64, 66, 109, and 111 each coordinate Cu cation. 2 cysteine pairs are disulfide-bonded: cysteine 85-cysteine 488 and cysteine 117-cysteine 205. The residue at position 196 (tyrosine 196) is a 3'-nitrotyrosine. Asparagine 208, asparagine 217, asparagine 292, and asparagine 333 each carry an N-linked (GlcNAc...) asparagine glycan. One can recognise a Plastocyanin-like 3 domain in the interval 348–470; the sequence is SVPVLLQILS…GGFAVVQAED (123 aa). Tyrosine 372 carries the 3'-nitrotyrosine modification. Asparagine 377 carries N-linked (GlcNAc...) asparagine glycosylation. Cu cation contacts are provided by histidine 395, histidine 398, and histidine 400. 2 N-linked (GlcNAc...) asparagine glycosylation sites follow: asparagine 416 and asparagine 436. Positions 452, 453, 454, and 458 each coordinate Cu cation.

This sequence belongs to the multicopper oxidase family. Requires Cu cation as cofactor.

It localises to the secreted. It catalyses the reaction 4 hydroquinone + O2 = 4 benzosemiquinone + 2 H2O. In terms of biological role, lignin degradation and detoxification of lignin-derived products. The protein is Laccase of Trametes maxima (White-rot fungus).